The following is a 292-amino-acid chain: Xyloglucan endotransglucosylase/hydrolase protein 2 (292 aa).

An N-terminal signal peptide occupies residues 1–24; the sequence is MNRIRYCFELVSVLFLMFTANARA. The region spanning 25-219 is the GH16 domain; it reads RGRGAIDFDV…WAYAPFKAQY (195 aa). Glu106 (nucleophile) is an active-site residue. Glu110 (proton donor) is an active-site residue. Xyloglucan contacts are provided by residues Glu110, 123-125, 133-135, 198-199, and Gly203; these read QTN, GRE, and NW. Intrachain disulfides connect Cys227-Cys239 and Cys275-Cys288. Arg280 contacts xyloglucan.

It belongs to the glycosyl hydrolase 16 family. XTH group 1 subfamily. Contains at least one intrachain disulfide bond essential for its enzymatic activity.

It localises to the secreted. It is found in the cell wall. Its subcellular location is the extracellular space. The protein resides in the apoplast. The enzyme catalyses breaks a beta-(1-&gt;4) bond in the backbone of a xyloglucan and transfers the xyloglucanyl segment on to O-4 of the non-reducing terminal glucose residue of an acceptor, which can be a xyloglucan or an oligosaccharide of xyloglucan.. May catalyze xyloglucan endohydrolysis (XEH) and/or endotransglycosylation (XET). Cleaves and religates xyloglucan polymers, an essential constituent of the primary cell wall, and thereby participates in cell wall construction of growing tissues. The polypeptide is Xyloglucan endotransglucosylase/hydrolase protein 2 (XTH2) (Arabidopsis thaliana (Mouse-ear cress)).